The following is a 331-amino-acid chain: ADP,ATP carrier protein 1, mitochondrial (331 aa).

Solcar repeat units lie at residues 29-122, 134-226, and 238-320; these read KNFA…FKRM, KWFG…LKPV, and ASFA…LQIL. Helical transmembrane passes span 31–58, 99–123, 132–152, 202–223, and 237–257; these read FAID…VKLL, TANV…KRMF, YWKW…SSLF, FNIS…YDSL, and FASF…SYPI. Positions 104 and 116 each coordinate ADP. Arginine 261 contacts ADP. The segment at 261–266 is important for transport activity; that stretch reads RRRMMM. Positions 261 to 266 match the Nucleotide carrier signature motif motif; it reads RRRMMM. Residues 297–317 traverse the membrane as a helical segment; it reads AGANILRAIAGAGVLSGYDQL.

This sequence belongs to the mitochondrial carrier (TC 2.A.29) family. Monomer.

It localises to the mitochondrion inner membrane. It catalyses the reaction ADP(in) + ATP(out) = ADP(out) + ATP(in). Its activity is regulated as follows. The matrix-open state (m-state) is inhibited by the membrane-permeable bongkrekic acid (BKA). The cytoplasmic-open state (c-state) is inhibited by the membrane-impermeable toxic inhibitor carboxyatractyloside (CATR). Functionally, ADP:ATP antiporter that mediates import of ADP into the mitochondrial matrix for ATP synthesis, and export of ATP out to fuel the cell. Cycles between the cytoplasmic-open state (c-state) and the matrix-open state (m-state): operates by the alternating access mechanism with a single substrate-binding site intermittently exposed to either the cytosolic (c-state) or matrix (m-state) side of the inner mitochondrial membrane. The sequence is that of ADP,ATP carrier protein 1, mitochondrial (ANT-G1) from Triticum aestivum (Wheat).